Consider the following 105-residue polypeptide: Chloroacetanilide N-alkylformylase 2, ferredoxin component (105 aa).

The 104-residue stretch at 2–105 folds into the 2Fe-2S ferredoxin-type domain; sequence PKLVVVTREG…GLTVTIAPED (104 aa). 4 residues coordinate [2Fe-2S] cluster: C40, C46, C49, and C86.

Belongs to the adrenodoxin/putidaredoxin family. The chloroacetanilide N-alkylformylase multicomponent enzyme system is composed of an oxygenase component (CndA) and an electron transfer component formed by a ferredoxin reductase (CndC1) and a ferredoxin (CndB1). In vitro, chloroacetanilide N-alkylformylase assays in which CndB1 is substituted for CndB2 demonstrate that the two enzymes possess nearly identical activities. [2Fe-2S] cluster is required as a cofactor.

Component of the chloroacetanilide N-alkylformylase multicomponent enzyme system involved in the degradation of chloroacetanilide herbicides (N-alkoxyalkyl-N-chloroacetyl-substituted aniline derivatives). In vitro, functions as an intermediate electron transfer protein. In Rhizorhabdus wittichii (strain DC-6 / KACC 16600) (Sphingomonas wittichii), this protein is Chloroacetanilide N-alkylformylase 2, ferredoxin component.